Reading from the N-terminus, the 548-residue chain is BTB/POZ domain-containing protein At5g17580 (548 aa).

The 68-residue stretch at 7-74 (SDLHINVKGV…CNGSEFKFTS (68 aa)) folds into the BTB domain. In terms of domain architecture, NPH3 spans 180 to 442 (DWKSEDLITI…VNVLCVSQLQ (263 aa)). The residue at position 383 (Tyr-383) is a Phosphotyrosine. Residues 442–493 (QIRDTVAKEIKGMEEKVDEEEEEEIEVSSDEDEMEKMSNKLLGLEIENDECV) are a coiled coil.

Belongs to the NPH3 family.

It participates in protein modification; protein ubiquitination. Functionally, may act as a substrate-specific adapter of an E3 ubiquitin-protein ligase complex (CUL3-RBX1-BTB) which mediates the ubiquitination and subsequent proteasomal degradation of target proteins. This chain is BTB/POZ domain-containing protein At5g17580, found in Arabidopsis thaliana (Mouse-ear cress).